Consider the following 965-residue polypeptide: Receptor-like protein 15 (965 aa).

Residues 1–23 (MEGKVFLGHNLIWVMLLMGQLHG) form the signal peptide. Topologically, residues 24-916 (YKSCIDEEKI…GVEADESIID (893 aa)) are extracellular. Asparagine 57, asparagine 95, asparagine 109, and asparagine 145 each carry an N-linked (GlcNAc...) asparagine glycan. 17 LRR repeats span residues 80–102 (EISF…LHPF), 103–127 (EDVR…GYKS), 131–154 (LRKL…FLSA), 156–179 (TSLT…ELRD), 180–204 (LTNL…ELSS), 206–230 (RKLK…KFCT), 243–267 (LNNM…LTSL), 268–290 (TGLR…SLGS), 292–315 (QSLE…SLAN), 316–341 (LSNL…SWKP), 342–365 (KFQL…LLHQ), 366–389 (KDLR…LLAN), 391–415 (TKLK…AHNL), 417–435 (FLDV…NIGW), 437–461 (FPHL…LGNM), 462–485 (NGIQ…FVNG), and 487–512 (YSMA…NFTN). An N-linked (GlcNAc...) asparagine glycan is attached at asparagine 194. An N-linked (GlcNAc...) asparagine glycan is attached at asparagine 315. N-linked (GlcNAc...) asparagine glycans are attached at residues asparagine 377 and asparagine 389. Asparagine 444 is a glycosylation site (N-linked (GlcNAc...) asparagine). N-linked (GlcNAc...) asparagine glycosylation occurs at asparagine 509. The stretch at 514–533 (LGLFMDNNLFTGKIGQGLRS) is one LRR 18; degenerate repeat. LRR repeat units lie at residues 534 to 557 (LINL…WIGE), 558 to 582 (LPSL…LFNK), 584 to 606 (SLQL…HDSR), 608 to 627 (GVVL…DTLL), 628 to 652 (ANVE…NIQN), 654 to 674 (SILL…LCGL), 675 to 698 (SNIQ…LSNT), 778 to 801 (LKLL…EFGG), 802 to 825 (LLEL…SISS), 827 to 850 (EKME…LTEL), and 851 to 875 (TSLS…QFNT). 2 N-linked (GlcNAc...) asparagine glycosylation sites follow: asparagine 546 and asparagine 581. N-linked (GlcNAc...) asparagine glycosylation is found at asparagine 652, asparagine 662, asparagine 688, and asparagine 697. 2 N-linked (GlcNAc...) asparagine glycosylation sites follow: asparagine 809 and asparagine 814. Residues asparagine 862, asparagine 893, and asparagine 898 are each glycosylated (N-linked (GlcNAc...) asparagine). Residues 917 to 937 (MVSFYLSFAAAYVTILIGILA) traverse the membrane as a helical segment. Over 938–965 (SLSFDSPWSRFWFYKVDAFIKKVRNLLL) the chain is Cytoplasmic.

It belongs to the RLP family.

It is found in the cell membrane. The sequence is that of Receptor-like protein 15 from Arabidopsis thaliana (Mouse-ear cress).